A 271-amino-acid chain; its full sequence is MTVHPVRPEFVPDPSLSQTEMEELQRDIAAAARFEDEMDVLPEAITRTGDAPDVDQTTLSTSADDRTEPPFIAGVDQAFVDDKAVSAIVVLQNGEVIERVSAVERTEIPYIPGLLSFREGGAILAAFAELETDPDVVLVDGSGRIHFREAGLATHIGVTLDVPAVGVAKNLLCGTPEQSLDERYPEGTRIPITADDSVETCPDGTVIGHALQTRQYDSPNRHINPLIVSPGHRVSASTAADIVEATADGYKLPEPTRLADSYADEAKATVE.

Positions 46–67 are disordered; that stretch reads TRTGDAPDVDQTTLSTSADDRT. The Mg(2+) site is built by aspartate 76 and aspartate 140.

The protein belongs to the endonuclease V family. The cofactor is Mg(2+).

The protein localises to the cytoplasm. It carries out the reaction Endonucleolytic cleavage at apurinic or apyrimidinic sites to products with a 5'-phosphate.. DNA repair enzyme involved in the repair of deaminated bases. Selectively cleaves double-stranded DNA at the second phosphodiester bond 3' to a deoxyinosine leaving behind the intact lesion on the nicked DNA. This chain is Endonuclease V, found in Haloarcula marismortui (strain ATCC 43049 / DSM 3752 / JCM 8966 / VKM B-1809) (Halobacterium marismortui).